The sequence spans 1112 residues: MRRDERDAKAMRSLQPPDGAGSPPESLRNGYVKSCVSPLRQDPPRGFFFHLCRFCNVELRPPPASPQQPRRCSPFCRARLSLGALAAFVLALLLGAEPESWAAGAAWLRTLLSVCSHSLSPLFSIACAFFFLTCFLTRTKRGPGPGRSCGSWWLLALPACCYLGDFLVWQWWSWPWGDGDAGSAAPHTPPEAAAGRLLLVLSCVGLLLTLAHPLRLRHCVLVLLLASFVWWVSFTSLGSLPSALRPLLSGLVGGAGCLLALGLDHFFQIREAPLHPRLSSAAEEKVPVIRPRRRSSCVSLGETAASYYGSCKIFRRPSLPCISREQMILWDWDLKQWYKPHYQNSGGGNGVDLSVLNEARNMVSDLLTDPSLPPQVISSLRSISSLMGAFSGSCRPKINPLTPFPGFYPCSEIEDPAEKGDRKLNKGLNRNSLPTPQLRRSSGTSGLLPVEQSSRWDRNNGKRPHQEFGISSQGCYLNGPFNSNLLTIPKQRSSSVSLTHHVGLRRAGVLSSLSPVNSSNHGPVSTGSLTNRSPIEFPDTADFLNKPSVILQRSLGNAPNTPDFYQQLRNSDSNLCNSCGHQMLKYVSTSESDGTDCCSGKSGEEENIFSKESFKLMETQQEEETEKKDSRKLFQEGDKWLTEEAQSEQQTNIEQEVSLDLILVEEYDSLIEKMSNWNFPIFELVEKMGEKSGRILSQVMYTLFQDTGLLEIFKIPTQQFMNYFRALENGYRDIPYHNRIHATDVLHAVWYLTTRPVPGLQQIHNGCGTGNETDSDGRINHGRIAYISSKSCSNPDESYGCLSSNIPALELMALYVAAAMHDYDHPGRTNAFLVATNAPQAVLYNDRSVLENHHAASAWNLYLSRPEYNFLLHLDHVEFKRFRFLVIEAILATDLKKHFDFLAEFNAKANDVNSNGIEWSNENDRLLVCQVCIKLADINGPAKVRDLHLKWTEGIVNEFYEQGDEEANLGLPISPFMDRSSPQLAKLQESFITHIVGPLCNSYDAAGLLPGQWLEAEEDNDTESGDDEDGEELDTEDEEMENNLNPKPPRRKSRRRIFCQLMHHLTENHKIWKEIVEEEEKCKADGNKLQVENSSLPQADEIQVIEEADEEE.

The span at Met-1–Ala-10 shows a compositional bias: basic and acidic residues. Residues Met-1–Glu-25 are interaction with RAPGEF3. The tract at residues Met-1–Ser-26 is disordered. Ser-13 is subject to Phosphoserine. Helical transmembrane passes span Phe-88–Leu-108, His-117–Thr-137, Trp-152–Trp-172, Ala-192–His-212, Val-220–Leu-240, and Leu-247–Phe-267. Ser-295 is subject to Phosphoserine; by PKB/AKT1 or PKB/AKT2. Phosphoserine is present on residues Ser-296 and Ser-442. The interval Glu-418–Ser-471 is disordered. The segment covering Leu-428 to Ser-445 has biased composition (polar residues). Residues Pro-436 to Asn-460 are interaction with PIK3R6. The segment covering Ser-454–Gln-466 has biased composition (basic and acidic residues). Residues Thr-651–Glu-1079 form the PDEase domain. The active-site Proton donor is His-737. His-737 serves as a coordination point for AMP. Mg(2+) contacts are provided by His-741, His-821, Asp-822, and Asp-937. Asp-822, Asp-937, and Gln-988 together coordinate AMP. Acidic residues-rich tracts occupy residues Glu-1017–Glu-1041 and Gln-1103–Glu-1112. Disordered regions lie at residues Glu-1017–Arg-1051 and Glu-1092–Glu-1112.

The protein belongs to the cyclic nucleotide phosphodiesterase family. PDE3 subfamily. As to quaternary structure, homodimer. Interacts with PIK3CG; regulates PDE3B activity and thereby cAMP levels in cells. Interacts with RAPGEF3 and PIK3R6; form a signaling complex that regulates phosphatidylinositol 3-kinase gamma in angiogenesis. Interacts with ABHD15; this interaction regulates PDE3B's stability and expression and, thereby, impacts the antilipolytic action of insulin. The cofactor is Mg(2+). Mn(2+) serves as cofactor. Phosphorylation at Ser-295 mediates insulin-induced activation of PDE3B. Abundant in adipose tissues.

It localises to the membrane. The catalysed reaction is a nucleoside 3',5'-cyclic phosphate + H2O = a nucleoside 5'-phosphate + H(+). It carries out the reaction 3',5'-cyclic AMP + H2O = AMP + H(+). It catalyses the reaction 3',5'-cyclic GMP + H2O = GMP + H(+). With respect to regulation, inhibited by cGMP. Functionally, cyclic nucleotide phosphodiesterase with a dual-specificity for the second messengers cAMP and cGMP, which are key regulators of many important physiological process. Regulates angiogenesis by inhibiting the cAMP-dependent guanine nucleotide exchange factor RAPGEF3 and downstream phosphatidylinositol 3-kinase gamma-mediated signaling. Controls cardiac contractility by reducing cAMP concentration in cardiocytes. In Homo sapiens (Human), this protein is cGMP-inhibited 3',5'-cyclic phosphodiesterase 3B.